An 870-amino-acid chain; its full sequence is DNA mismatch repair protein MutS (870 aa).

608–615 contributes to the ATP binding site; it reads GPNMAGKS.

Belongs to the DNA mismatch repair MutS family.

In terms of biological role, this protein is involved in the repair of mismatches in DNA. It is possible that it carries out the mismatch recognition step. This protein has a weak ATPase activity. The protein is DNA mismatch repair protein MutS of Persephonella marina (strain DSM 14350 / EX-H1).